The following is a 212-amino-acid chain: Orotate phosphoribosyltransferase (212 aa).

Residue Lys26 coordinates 5-phospho-alpha-D-ribose 1-diphosphate. An orotate-binding site is contributed by Phe34–Phe35. 5-phospho-alpha-D-ribose 1-diphosphate is bound by residues Tyr72–Lys73, Arg98, Lys99, Lys102, His104, and Asp123–Ser131. The orotate site is built by Ser127 and Arg155.

It belongs to the purine/pyrimidine phosphoribosyltransferase family. PyrE subfamily. As to quaternary structure, homodimer. The cofactor is Mg(2+).

The catalysed reaction is orotidine 5'-phosphate + diphosphate = orotate + 5-phospho-alpha-D-ribose 1-diphosphate. The protein operates within pyrimidine metabolism; UMP biosynthesis via de novo pathway; UMP from orotate: step 1/2. In terms of biological role, catalyzes the transfer of a ribosyl phosphate group from 5-phosphoribose 1-diphosphate to orotate, leading to the formation of orotidine monophosphate (OMP). The polypeptide is Orotate phosphoribosyltransferase (Thiobacillus denitrificans (strain ATCC 25259 / T1)).